The chain runs to 147 residues: Cyanate hydratase (147 aa).

Residues arginine 88, glutamate 91, and serine 114 contribute to the active site.

This sequence belongs to the cyanase family.

It catalyses the reaction cyanate + hydrogencarbonate + 3 H(+) = NH4(+) + 2 CO2. In terms of biological role, catalyzes the reaction of cyanate with bicarbonate to produce ammonia and carbon dioxide. The sequence is that of Cyanate hydratase from Cupriavidus necator (strain ATCC 17699 / DSM 428 / KCTC 22496 / NCIMB 10442 / H16 / Stanier 337) (Ralstonia eutropha).